The chain runs to 106 residues: Large ribosomal subunit protein uL24 (106 aa).

It belongs to the universal ribosomal protein uL24 family. Part of the 50S ribosomal subunit.

One of two assembly initiator proteins, it binds directly to the 5'-end of the 23S rRNA, where it nucleates assembly of the 50S subunit. Functionally, one of the proteins that surrounds the polypeptide exit tunnel on the outside of the subunit. The polypeptide is Large ribosomal subunit protein uL24 (Blochmanniella pennsylvanica (strain BPEN)).